Here is a 305-residue protein sequence, read N- to C-terminus: Sulfate adenylyltransferase subunit 2 (305 aa).

This sequence belongs to the PAPS reductase family. CysD subfamily. Heterodimer composed of CysD, the smaller subunit, and CysN.

It carries out the reaction sulfate + ATP + H(+) = adenosine 5'-phosphosulfate + diphosphate. Its pathway is sulfur metabolism; hydrogen sulfide biosynthesis; sulfite from sulfate: step 1/3. Its function is as follows. With CysN forms the ATP sulfurylase (ATPS) that catalyzes the adenylation of sulfate producing adenosine 5'-phosphosulfate (APS) and diphosphate, the first enzymatic step in sulfur assimilation pathway. APS synthesis involves the formation of a high-energy phosphoric-sulfuric acid anhydride bond driven by GTP hydrolysis by CysN coupled to ATP hydrolysis by CysD. This is Sulfate adenylyltransferase subunit 2 from Pseudomonas fluorescens (strain SBW25).